The sequence spans 333 residues: 5-formaminoimidazole-4-carboxamide-1-(beta)-D-ribofuranosyl 5'-monophosphate synthetase (333 aa).

5-amino-1-(5-phospho-beta-D-ribosyl)imidazole-4-carboxamide is bound by residues His-9 and Ser-73. The ATP-grasp domain maps to 94 to 324 (RNLFEWEANQ…ISREIKLAIN (231 aa)). ATP is bound by residues 124-184 (PEDI…VPMY) and Glu-206. Asn-230 lines the 5-amino-1-(5-phospho-beta-D-ribosyl)imidazole-4-carboxamide pocket. The Mg(2+) site is built by Glu-269 and Glu-282.

This sequence belongs to the phosphohexose mutase family. Mg(2+) serves as cofactor. The cofactor is Mn(2+).

The catalysed reaction is 5-amino-1-(5-phospho-beta-D-ribosyl)imidazole-4-carboxamide + formate + ATP = 5-formamido-1-(5-phospho-D-ribosyl)imidazole-4-carboxamide + ADP + phosphate. Its pathway is purine metabolism; IMP biosynthesis via de novo pathway; 5-formamido-1-(5-phospho-D-ribosyl)imidazole-4-carboxamide from 5-amino-1-(5-phospho-D-ribosyl)imidazole-4-carboxamide (formate route): step 1/1. Functionally, catalyzes the ATP- and formate-dependent formylation of 5-aminoimidazole-4-carboxamide-1-beta-d-ribofuranosyl 5'-monophosphate (AICAR) to 5-formaminoimidazole-4-carboxamide-1-beta-d-ribofuranosyl 5'-monophosphate (FAICAR) in the absence of folates. This Sulfurisphaera tokodaii (strain DSM 16993 / JCM 10545 / NBRC 100140 / 7) (Sulfolobus tokodaii) protein is 5-formaminoimidazole-4-carboxamide-1-(beta)-D-ribofuranosyl 5'-monophosphate synthetase.